The primary structure comprises 730 residues: Ribosomal RNA large subunit methyltransferase K/L (730 aa).

Positions 46-157 (TAYRLCVWSR…RGEAILSLDL (112 aa)) constitute a THUMP domain. The segment at 394–418 (GERREAQPEGTEARQQVPQASEPAR) is disordered.

This sequence belongs to the methyltransferase superfamily. RlmKL family.

It is found in the cytoplasm. It catalyses the reaction guanosine(2445) in 23S rRNA + S-adenosyl-L-methionine = N(2)-methylguanosine(2445) in 23S rRNA + S-adenosyl-L-homocysteine + H(+). It carries out the reaction guanosine(2069) in 23S rRNA + S-adenosyl-L-methionine = N(2)-methylguanosine(2069) in 23S rRNA + S-adenosyl-L-homocysteine + H(+). Specifically methylates the guanine in position 2445 (m2G2445) and the guanine in position 2069 (m7G2069) of 23S rRNA. This chain is Ribosomal RNA large subunit methyltransferase K/L, found in Pseudomonas putida (strain ATCC 47054 / DSM 6125 / CFBP 8728 / NCIMB 11950 / KT2440).